Reading from the N-terminus, the 404-residue chain is Serine/threonine transporter SstT (404 aa).

8 consecutive transmembrane segments (helical) span residues 17-37, 39-59, 75-95, 138-158, 179-199, 212-232, 287-307, and 313-333; these read IGIGVVIGVMLGILAPDLTGF, ILGKLFVGGLKAIAPLLVFAL, MTLIIVLYLFGTFASALVAVL, ALATANYIGVLSWAIIFGLAL, IVVWIINLAPIGIMSLVFTTI, FLILVLVGTMLFVALVVNPLI, IPLGATINMGGAAITINVLTL, and FGIPIDFLTALLLSVVAAVSA.

This sequence belongs to the dicarboxylate/amino acid:cation symporter (DAACS) (TC 2.A.23) family.

It localises to the cell membrane. The enzyme catalyses L-serine(in) + Na(+)(in) = L-serine(out) + Na(+)(out). The catalysed reaction is L-threonine(in) + Na(+)(in) = L-threonine(out) + Na(+)(out). Its function is as follows. Involved in the import of serine and threonine into the cell, with the concomitant import of sodium (symport system). This chain is Serine/threonine transporter SstT, found in Streptococcus pyogenes serotype M1.